Here is a 64-residue protein sequence, read N- to C-terminus: Basic secretory protease (64 aa).

Requires a divalent metal cation as cofactor. Glycosylated.

With respect to regulation, inhibited by EDTA. Metalloprotease, digests gelatin and azocasein (in vitro). The protein is Basic secretory protease of Boswellia serrata (Indian frankincense).